A 795-amino-acid chain; its full sequence is RalBP1-associated Eps domain-containing protein 1 (795 aa).

The EH 1 domain maps to Glu-10 to Ala-113. The segment at Leu-112–Pro-238 is disordered. Residues Ser-115–Tyr-126 are compositionally biased toward polar residues. Phosphoserine occurs at positions 145, 162, 166, and 170. Over residues Glu-156–Gln-168 the composition is skewed to low complexity. Position 173 is a phosphothreonine (Thr-173). The span at Gly-205–Ala-216 shows a compositional bias: low complexity. Phosphoserine occurs at positions 272 and 273. Residues Gln-285 to Leu-374 enclose the EH 2 domain. Tyr-288 carries the phosphotyrosine modification. The residue at position 307 (Ser-307) is a Phosphoserine. In terms of domain architecture, EF-hand spans Leu-318 to Arg-353. Residues Asp-331, Asp-333, Asp-335, and Glu-342 each coordinate Ca(2+). Disordered regions lie at residues Val-380–Thr-433 and Glu-469–Thr-720. Residues Leu-407 to Thr-433 are compositionally biased toward polar residues. Ser-475, Ser-482, and Ser-489 each carry phosphoserine. 2 stretches are compositionally biased toward polar residues: residues Ile-497 to Phe-518 and Ile-525 to Asn-542. Residue Ser-539 is modified to Phosphoserine. The residue at position 543 (Thr-543) is a Phosphothreonine. Residues Thr-543–Gln-553 are compositionally biased toward pro residues. Ser-561 carries the post-translational modification Phosphoserine. Over residues Leu-562–Gly-573 the composition is skewed to polar residues. Low complexity predominate over residues Gln-574–Pro-583. Pro residues predominate over residues Pro-584–Ala-595. Composition is skewed to polar residues over residues Thr-611–Glu-622 and Ala-681–Thr-692. Residues His-651–Leu-795 are interaction with RALBP1. Residues Lys-707–Thr-720 are compositionally biased toward basic and acidic residues. Phosphoserine occurs at positions 708 and 739. A coiled-coil region spans residues Ser-750–Arg-790.

In terms of assembly, homodimer (Potential). Interacts with RALBP1, CRK and GRB2. Binding to RALBP1 does not affect its Ral-binding activity. Forms a complex with the SH3 domains of CRK and GRB2 which may link it to an EGF-responsive tyrosine kinase. Interacts with RAB11FIP2. Interacts with AMPH, ITSN1 (via SH3 domains) and SGIP1; may be involved in clathrin-mediated endocytosis. In terms of processing, EGF stimulates phosphorylation on Tyr-residues. As to expression, expressed in all tissues examined. The highest level expression was found in the kidney and testis.

The protein resides in the membrane. It localises to the clathrin-coated pit. In terms of biological role, may coordinate the cellular actions of activated EGF receptors and Ral-GTPases. This is RalBP1-associated Eps domain-containing protein 1 (Reps1) from Mus musculus (Mouse).